The chain runs to 260 residues: Homeobox protein CDX-1 (260 aa).

Positions K149–N208 form a DNA-binding region, homeobox. Residues Y152 to Y173 form an interaction with DNA region. The tract at residues R191 to A202 is interaction with 5-mCpG DNA. Positions E204–P260 are disordered. Low complexity-rich tracts occupy residues Q213–T223 and S240–L252.

Belongs to the Caudal homeobox family.

It is found in the nucleus. In terms of biological role, plays a role in transcriptional regulation. Involved in activated KRAS-mediated transcriptional activation of PRKD1. Binds to the PRKD1 promoter. Could play a role in the terminal differentiation of the intestine. Binds preferentially to methylated DNA. This is Homeobox protein CDX-1 (CDX1) from Gallus gallus (Chicken).